Consider the following 447-residue polypeptide: Methylenetetrahydrofolate--tRNA-(uracil-5-)-methyltransferase TrmFO (447 aa).

9–14 (GGGLAG) serves as a coordination point for FAD.

Belongs to the MnmG family. TrmFO subfamily. The cofactor is FAD.

The protein resides in the cytoplasm. The catalysed reaction is uridine(54) in tRNA + (6R)-5,10-methylene-5,6,7,8-tetrahydrofolate + NADH + H(+) = 5-methyluridine(54) in tRNA + (6S)-5,6,7,8-tetrahydrofolate + NAD(+). The enzyme catalyses uridine(54) in tRNA + (6R)-5,10-methylene-5,6,7,8-tetrahydrofolate + NADPH + H(+) = 5-methyluridine(54) in tRNA + (6S)-5,6,7,8-tetrahydrofolate + NADP(+). Its function is as follows. Catalyzes the folate-dependent formation of 5-methyl-uridine at position 54 (M-5-U54) in all tRNAs. This is Methylenetetrahydrofolate--tRNA-(uracil-5-)-methyltransferase TrmFO from Paramagnetospirillum magneticum (strain ATCC 700264 / AMB-1) (Magnetospirillum magneticum).